Consider the following 82-residue polypeptide: Small ribosomal subunit protein bS18 (82 aa).

Residues 1 to 25 (MTEMNQTAIRRPFHRRRKTCPFSGT) form a disordered region.

Belongs to the bacterial ribosomal protein bS18 family. Part of the 30S ribosomal subunit. Forms a tight heterodimer with protein bS6.

Its function is as follows. Binds as a heterodimer with protein bS6 to the central domain of the 16S rRNA, where it helps stabilize the platform of the 30S subunit. This is Small ribosomal subunit protein bS18 from Bartonella henselae (strain ATCC 49882 / DSM 28221 / CCUG 30454 / Houston 1) (Rochalimaea henselae).